The sequence spans 222 residues: Octanoyltransferase (222 aa).

In terms of domain architecture, BPL/LPL catalytic spans 35–214; sequence GTAPELIWLL…HLDGFLARLD (180 aa). Substrate-binding positions include 73–80, 145–147, and 158–160; these read RGGRYTYH, AIG, and GFS. The active-site Acyl-thioester intermediate is C176.

This sequence belongs to the LipB family.

The protein localises to the cytoplasm. The catalysed reaction is octanoyl-[ACP] + L-lysyl-[protein] = N(6)-octanoyl-L-lysyl-[protein] + holo-[ACP] + H(+). It participates in protein modification; protein lipoylation via endogenous pathway; protein N(6)-(lipoyl)lysine from octanoyl-[acyl-carrier-protein]: step 1/2. Catalyzes the transfer of endogenously produced octanoic acid from octanoyl-acyl-carrier-protein onto the lipoyl domains of lipoate-dependent enzymes. Lipoyl-ACP can also act as a substrate although octanoyl-ACP is likely to be the physiological substrate. This Novosphingobium aromaticivorans (strain ATCC 700278 / DSM 12444 / CCUG 56034 / CIP 105152 / NBRC 16084 / F199) protein is Octanoyltransferase.